Consider the following 115-residue polypeptide: Cyclin-dependent protein kinase inhibitor SMR3 (115 aa).

Over residues 17–36 (KIRLPTRPELDIPDSDHEDP) the composition is skewed to basic and acidic residues. A disordered region spans residues 17-82 (KIRLPTRPEL…RSSGTKRKLT (66 aa)). Residues 67–81 (RKPKPNRSSGTKRKL) are compositionally biased toward basic residues.

In terms of assembly, interacts with CDKA-1 and D-type cyclins. Expressed at low levels in roots and stems.

Its subcellular location is the nucleus. Its function is as follows. Probable cyclin-dependent protein kinase (CDK) inhibitor that functions as a repressor of mitosis in the endoreduplication cell cycle. In Arabidopsis thaliana (Mouse-ear cress), this protein is Cyclin-dependent protein kinase inhibitor SMR3.